A 442-amino-acid chain; its full sequence is Endothelin receptor type B (442 aa).

The first 26 residues, 1–26 (MQPPPSLCGRALVALVLACGLSRIWG), serve as a signal peptide directing secretion. Over 27-101 (EERGFPPDRA…GSIEIKETFK (75 aa)) the chain is Extracellular. Asn-59 carries an N-linked (GlcNAc...) asparagine glycan. Residues 69 to 88 (AEVPKGDRTAGSPPRTISPP) are disordered. Residues 102–126 (YINTVVSCLVFVLGIIGNSTLLRII) form a helical membrane-spanning segment. Residues 127–137 (YKNKCMRNGPN) are Cytoplasmic-facing. The chain crosses the membrane as a helical span at residues 138–163 (ILIASLALGDLLHIIIDIPITVYKLL). Residues 164 to 175 (AEDWPFGVEMCK) are Extracellular-facing. Cysteines 174 and 255 form a disulfide. The chain crosses the membrane as a helical span at residues 176–197 (LVPFIQKASVGITVLSLCALSI). At 198–218 (DRYRAVASWSRIKGIGVPKWT) the chain is on the cytoplasmic side. Residues 219–243 (AVEIVLIWVVSVVLAVPEAVGFDMI) form a helical membrane-spanning segment. The Extracellular segment spans residues 244-271 (TIDYKGRYLRICLLHPTQKTAFMQFYKT). A helical membrane pass occupies residues 272–296 (AKDWWLFSFYFCLPLAITAFFYTLM). Over 297 to 324 (TCEMLRKKSGMQIALNDHLKQRREVAKT) the chain is Cytoplasmic. Ser-305 is modified (phosphoserine). A helical membrane pass occupies residues 325 to 350 (VFCLVLVFALCWLPLHLSRILKLTIY). The Extracellular segment spans residues 351–362 (DQNDPNRCELLS). A helical membrane pass occupies residues 363–389 (FLLVLDYIGINMASLNSCINPIALYLV). The Cytoplasmic portion of the chain corresponds to 390–442 (SKRFKNCFKSCLCCWCQSFEEKQSLEEKQSCLKFKANDHGYDNFRSSNKYSSS). Residues Cys-402, Cys-403, and Cys-405 are each lipidated (S-palmitoyl cysteine). A Phosphoserine modification is found at Ser-419. Phosphotyrosine is present on Tyr-439. Ser-440, Ser-441, and Ser-442 each carry phosphoserine.

Belongs to the G-protein coupled receptor 1 family. Endothelin receptor subfamily. EDNRB sub-subfamily.

It localises to the cell membrane. Non-specific receptor for endothelin 1, 2, and 3. Mediates its action by association with G proteins that activate a phosphatidylinositol-calcium second messenger system. The polypeptide is Endothelin receptor type B (EDNRB) (Canis lupus familiaris (Dog)).